We begin with the raw amino-acid sequence, 214 residues long: Ribosomal RNA large subunit methyltransferase E (214 aa).

S-adenosyl-L-methionine-binding residues include G60, W62, D86, D102, and D127. K167 (proton acceptor) is an active-site residue.

The protein belongs to the class I-like SAM-binding methyltransferase superfamily. RNA methyltransferase RlmE family.

Its subcellular location is the cytoplasm. It carries out the reaction uridine(2552) in 23S rRNA + S-adenosyl-L-methionine = 2'-O-methyluridine(2552) in 23S rRNA + S-adenosyl-L-homocysteine + H(+). In terms of biological role, specifically methylates the uridine in position 2552 of 23S rRNA at the 2'-O position of the ribose in the fully assembled 50S ribosomal subunit. The sequence is that of Ribosomal RNA large subunit methyltransferase E from Janthinobacterium sp. (strain Marseille) (Minibacterium massiliensis).